The primary structure comprises 497 residues: Probable cytosol aminopeptidase (497 aa).

Mn(2+) contacts are provided by K263 and D268. Residue K275 is part of the active site. Residues D286, D345, and E347 each coordinate Mn(2+). R349 is a catalytic residue.

It belongs to the peptidase M17 family. The cofactor is Mn(2+).

The protein resides in the cytoplasm. The catalysed reaction is Release of an N-terminal amino acid, Xaa-|-Yaa-, in which Xaa is preferably Leu, but may be other amino acids including Pro although not Arg or Lys, and Yaa may be Pro. Amino acid amides and methyl esters are also readily hydrolyzed, but rates on arylamides are exceedingly low.. It catalyses the reaction Release of an N-terminal amino acid, preferentially leucine, but not glutamic or aspartic acids.. In terms of biological role, presumably involved in the processing and regular turnover of intracellular proteins. Catalyzes the removal of unsubstituted N-terminal amino acids from various peptides. This is Probable cytosol aminopeptidase from Sinorhizobium fredii (strain NBRC 101917 / NGR234).